The following is a 239-amino-acid chain: Succinate dehydrogenase [ubiquinone] iron-sulfur subunit (239 aa).

Residues 24-99 (AEAKFSVHPI…NANIITIYPL (76 aa)) enclose the 2Fe-2S ferredoxin-type domain. Positions 63, 68, 71, and 83 each coordinate [2Fe-2S] cluster. One can recognise a 4Fe-4S ferredoxin-type domain in the interval 142-172 (DRSELNGIYECILCACCSASCPSYWWNHDKY). Positions 152, 155, and 158 each coordinate [4Fe-4S] cluster. Residue Cys-162 participates in [3Fe-4S] cluster binding. Trp-167 lines the a ubiquinone pocket. [3Fe-4S] cluster contacts are provided by Cys-209 and Cys-215. Cys-219 is a binding site for [4Fe-4S] cluster.

This sequence belongs to the succinate dehydrogenase/fumarate reductase iron-sulfur protein family. In terms of assembly, component of complex II composed of four subunits: a flavoprotein (FP), an iron-sulfur protein (IP), and a cytochrome b composed of a large and a small subunit. The cofactor is [2Fe-2S] cluster. [3Fe-4S] cluster serves as cofactor. Requires [4Fe-4S] cluster as cofactor.

Its subcellular location is the mitochondrion inner membrane. It catalyses the reaction a quinone + succinate = fumarate + a quinol. The protein operates within carbohydrate metabolism; tricarboxylic acid cycle; fumarate from succinate (eukaryal route): step 1/1. Functionally, iron-sulfur protein (IP) subunit of succinate dehydrogenase (SDH) that is involved in complex II of the mitochondrial electron transport chain and is responsible for transferring electrons from succinate to ubiquinone (coenzyme Q). The chain is Succinate dehydrogenase [ubiquinone] iron-sulfur subunit (SDH2) from Porphyra purpurea (Red seaweed).